Here is a 661-residue protein sequence, read N- to C-terminus: Transmembrane and coiled-coil domain-containing protein STS1 (661 aa).

2 disordered regions span residues 34–71 and 154–185; these read AHHHHDDDDEEQGRTSTSSGGGGGSSSSSSNSGAGADA and VGNTIKGGDQDALPSSSGTDKSPGESSHDDQL. Positions 59 to 69 are enriched in low complexity; that stretch reads SSSSSNSGAGA. The segment covering 175 to 184 has biased composition (basic and acidic residues); that stretch reads SPGESSHDDQ. Transmembrane regions (helical) follow at residues 306 to 326, 333 to 353, 355 to 375, and 466 to 486; these read ALLAITGGLAAPAIAAGFGAL, LVPVIGASGFAAMATAAGSVA, SVAVAASFGAAGAGLTGSKMA, and LSGLLAAFAWPATLLAATDFI.

Belongs to the TMCO4 family. As to quaternary structure, interacts with PKS10/PKS2 and 4CLL9/ACOS12.

The protein resides in the endoplasmic reticulum membrane. In terms of biological role, involved in anther lipids biosynthesis and is required for tapetum degradation and pollen wall formation. Required for the formation of Ubisch bodies and microspores. Possesses lipase activity in vitro toward two synthetic substrates, p-nitrophenyl acetate (pNPA) and p-nitrophenyl butyrate (pNPB). The chain is Transmembrane and coiled-coil domain-containing protein STS1 from Oryza sativa subsp. japonica (Rice).